The chain runs to 171 residues: MKIWKDVFTGDEMFSDTYKVKLVDDVMYEVYGKHVSRTLGDVQLDGANPSAEEAEEGTESATESGVDIVLNHRLVETGFSDKKQFTTYLKDYMKKLVTRLEEKSPGEVEVFKTNINKVMKDLLGRFKDLQFFTGESMDCEGLIAMLEYRDIDGESVPVLLCFKHGLEEEKF.

In terms of domain architecture, TCTP spans 1–171 (MKIWKDVFTG…FKHGLEEEKF (171 aa)).

It belongs to the TCTP family.

The protein resides in the cytoplasm. Its function is as follows. Involved in calcium binding and microtubule stabilization. This Anopheles gambiae (African malaria mosquito) protein is Translationally-controlled tumor protein homolog.